The sequence spans 424 residues: Dual-specificity RNA methyltransferase RlmN (424 aa).

Glu-132 serves as the catalytic Proton acceptor. The Radical SAM core domain occupies 138 to 388 (GPDRGTLCVS…VRTPRGRDIL (251 aa)). Residues Cys-145 and Cys-391 are joined by a disulfide bond. [4Fe-4S] cluster-binding residues include Cys-152, Cys-156, and Cys-159. Residues 217 to 218 (GE), Ser-249, 271 to 273 (SLH), and Asn-348 contribute to the S-adenosyl-L-methionine site. Residue Cys-391 is the S-methylcysteine intermediate of the active site.

The protein belongs to the radical SAM superfamily. RlmN family. [4Fe-4S] cluster is required as a cofactor.

It localises to the cytoplasm. It catalyses the reaction adenosine(2503) in 23S rRNA + 2 reduced [2Fe-2S]-[ferredoxin] + 2 S-adenosyl-L-methionine = 2-methyladenosine(2503) in 23S rRNA + 5'-deoxyadenosine + L-methionine + 2 oxidized [2Fe-2S]-[ferredoxin] + S-adenosyl-L-homocysteine. It carries out the reaction adenosine(37) in tRNA + 2 reduced [2Fe-2S]-[ferredoxin] + 2 S-adenosyl-L-methionine = 2-methyladenosine(37) in tRNA + 5'-deoxyadenosine + L-methionine + 2 oxidized [2Fe-2S]-[ferredoxin] + S-adenosyl-L-homocysteine. In terms of biological role, specifically methylates position 2 of adenine 2503 in 23S rRNA and position 2 of adenine 37 in tRNAs. m2A2503 modification seems to play a crucial role in the proofreading step occurring at the peptidyl transferase center and thus would serve to optimize ribosomal fidelity. The sequence is that of Dual-specificity RNA methyltransferase RlmN from Methylobacterium radiotolerans (strain ATCC 27329 / DSM 1819 / JCM 2831 / NBRC 15690 / NCIMB 10815 / 0-1).